A 352-amino-acid chain; its full sequence is Cobalt transport protein NhlF (352 aa).

8 helical membrane-spanning segments follow: residues 23–43 (LASVVGAIVILHVLGVALYLG), 46–66 (GNPAAAGGLAGSGVLAYVLGV), 95–115 (VGFFFAMGHSTVVVVLALVVA), 131–151 (EIGGLVATVVAVTFLSIVAGL), 206–226 (PVGLLMGLGLETASEVTLLTL), 230–250 (AATGGTLSIAAVLSLPLLFAA), 290–310 (VIGLFVAGIYVCALLAHLPMF), and 323–343 (FEFLGYAVAAAFILTWTGALL).

The protein belongs to the NiCoT transporter (TC 2.A.52) family.

Its subcellular location is the cell membrane. With respect to regulation, cobalt uptake is inhibited by uncouplers (CCCP and 3,5-di-tert-butyl-4-hydroxybenzylidenemalononitrile) and by the addition of excess nickel. Functionally, mediates energy-dependent uptake of cobalt ions into the cell. Can also transport nickel ions, but cobalt is the preferred substrate. The sequence is that of Cobalt transport protein NhlF (nhlF) from Rhodococcus rhodochrous.